The primary structure comprises 319 residues: Probable arabinan endo-1,5-alpha-L-arabinosidase C (319 aa).

Residues 1–16 (MFVYTLIFLFLAAANA) form the signal peptide. Aspartate 31 functions as the Proton acceptor in the catalytic mechanism. N-linked (GlcNAc...) asparagine glycosylation occurs at asparagine 190. Glutamate 198 (proton donor) is an active-site residue. Asparagine 222 is a glycosylation site (N-linked (GlcNAc...) asparagine).

It belongs to the glycosyl hydrolase 43 family.

Its subcellular location is the secreted. The catalysed reaction is Endohydrolysis of (1-&gt;5)-alpha-arabinofuranosidic linkages in (1-&gt;5)-arabinans.. Its pathway is glycan metabolism; L-arabinan degradation. Functionally, endo-1,5-alpha-L-arabinanase involved in degradation of pectin. Its preferred substrate is linear 1,5-alpha-L-arabinan. The sequence is that of Probable arabinan endo-1,5-alpha-L-arabinosidase C (abnC) from Aspergillus clavatus (strain ATCC 1007 / CBS 513.65 / DSM 816 / NCTC 3887 / NRRL 1 / QM 1276 / 107).